The primary structure comprises 161 residues: Vitamin K epoxide reductase complex subunit 1 (161 aa).

Over 1–9 (MGTTWRSPG) the chain is Cytoplasmic. The helical transmembrane segment at 10–29 (LVRLALCLAGLALSLYALHV) threads the bilayer. Residues 30 to 80 (KAARARDENYRALCDVGTAISCSRVFSSRWGRGFGLVEHMLGADSVLNQSN) lie on the Lumenal side of the membrane. Cys43 and Cys51 are disulfide-bonded. Asn80 contributes to the (S)-warfarin binding site. The helical transmembrane segment at 81 to 95 (SIFGCLFYTLQLLLG) threads the bilayer. The Cytoplasmic portion of the chain corresponds to 96–100 (CLRGR). A helical membrane pass occupies residues 101 to 128 (WASILLVLSSLVSVAGSVYLAWILFFVL). Over 129–131 (YDF) the chain is Lumenal. Cys132 and Cys135 are oxidised to a cystine. Residues 132–153 (CIVCITTYAINVGLMLLSFQKV) traverse the membrane as a helical segment. Residues Cys135 and Tyr139 each contribute to the phylloquinone site. Tyr139 is a binding site for (S)-warfarin. Topologically, residues 154–161 (PEHKTKKH) are cytoplasmic.

Belongs to the VKOR family. As to expression, detected in liver.

The protein resides in the endoplasmic reticulum membrane. It carries out the reaction phylloquinone + [protein]-disulfide + H2O = 2,3-epoxyphylloquinone + [protein]-dithiol. The enzyme catalyses phylloquinol + [protein]-disulfide = phylloquinone + [protein]-dithiol. With respect to regulation, inhibited by warfarin (coumadin). Warfarin locks VKORC1 in both redox states into the closed conformation. In terms of biological role, involved in vitamin K metabolism. Catalytic subunit of the vitamin K epoxide reductase (VKOR) complex which reduces inactive vitamin K 2,3-epoxide to active vitamin K. Vitamin K is required for the gamma-carboxylation of various proteins, including clotting factors, and is required for normal blood coagulation, but also for normal bone development. This chain is Vitamin K epoxide reductase complex subunit 1 (Vkorc1), found in Mus musculus (Mouse).